Here is a 688-residue protein sequence, read N- to C-terminus: Alpha-1,4-glucan:maltose-1-phosphate maltosyltransferase (688 aa).

Positions 289, 349, and 384 each coordinate alpha-maltose 1-phosphate. The Nucleophile role is filled by aspartate 420. Asparagine 421 is an alpha-maltose 1-phosphate binding site. Glutamate 449 serves as the catalytic Proton donor. 560–561 serves as a coordination point for alpha-maltose 1-phosphate; the sequence is KY.

This sequence belongs to the glycosyl hydrolase 13 family. GlgE subfamily. In terms of assembly, homodimer.

It carries out the reaction alpha-maltose 1-phosphate + [(1-&gt;4)-alpha-D-glucosyl](n) = [(1-&gt;4)-alpha-D-glucosyl](n+2) + phosphate. Functionally, maltosyltransferase that uses maltose 1-phosphate (M1P) as the sugar donor to elongate linear or branched alpha-(1-&gt;4)-glucans. Is involved in a branched alpha-glucan biosynthetic pathway from trehalose, together with TreS, Mak and GlgB. The polypeptide is Alpha-1,4-glucan:maltose-1-phosphate maltosyltransferase (Rhodospirillum rubrum (strain ATCC 11170 / ATH 1.1.1 / DSM 467 / LMG 4362 / NCIMB 8255 / S1)).